Reading from the N-terminus, the 425-residue chain is Caveolae-associated protein 2 (425 aa).

Positions 1–42 are disordered; it reads MGEDAAQAEKFQHPGSDMRQEKPSSPSPMPSSTPSPSLNLGN. Gly-2 bears the N-acetylglycine mark. The segment at 2–168 is interaction with CAVIN1; that stretch reads GEDAAQAEKF…IFQEENEIPA (167 aa). Residues 10 to 22 show a composition bias toward basic and acidic residues; sequence KFQHPGSDMRQEK. 4 positions are modified to phosphoserine: Ser-27, Ser-35, Ser-37, and Ser-51. Coiled-coil stretches lie at residues 61–82 and 125–154; these read LLDKLVNMLDAVQENQHKMEQR and TRAVKERMDRQCAQVKRLENNHAQLLRRNH. Residues 62 to 100 are leucine-zipper; the sequence is LDKLVNMLDAVQENQHKMEQRQISLEGSVKGIQNDLTKL. Phosphothreonine is present on residues Thr-196 and Thr-199. 2 disordered regions span residues 199-234 and 271-425; these read TVDLSSDDDLPHDEEALEDSAEEKVEESRAEKIKRS and IKKS…HQTS. Residues Ser-203, Ser-204, and Ser-218 each carry the phosphoserine modification. Over residues 203-219 the composition is skewed to acidic residues; the sequence is SSDDDLPHDEEALEDSA. The stretch at 210–268 forms a coiled coil; sequence HDEEALEDSAEEKVEESRAEKIKRSSLKKVDSLKKAFSRQNIEKKMNKLGTKIVSVERR. Positions 220–234 are enriched in basic and acidic residues; that stretch reads EEKVEESRAEKIKRS. The segment covering 274–287 has biased composition (polar residues); that stretch reads SLTSNHQKISSGKS. Phosphoserine is present on residues Ser-283, Ser-284, Ser-287, Ser-288, and Ser-293. The segment covering 303–317 has biased composition (basic and acidic residues); it reads REGESHAENETKSED. Ser-332, Ser-341, Ser-366, and Ser-370 each carry phosphoserine. Phosphothreonine is present on Thr-375. A compositionally biased stretch (acidic residues) spans 376–385; that stretch reads IVEDEEEESV. Residue Tyr-395 is modified to Phosphotyrosine. Ser-403 is modified (phosphoserine).

This sequence belongs to the CAVIN family. As to quaternary structure, component of the CAVIN complex composed of CAVIN1, CAVIN2, CAVIN3 and CAVIN4. Binds to PRKCA in the presence of phosphatidylserine. Interacts with CAVIN4; this augments the transactivation of NPPA by CAVIN4. Interacts with CAVIN1. Interacts with CAV3. In terms of processing, phosphorylated on Ser residues. Highly expressed in heart and lung, and expressed at lower levels in brain, kidney, liver, pancreas, placenta, and skeletal muscle.

It localises to the cytoplasm. The protein localises to the cytosol. Its subcellular location is the membrane. The protein resides in the caveola. Its function is as follows. Plays an important role in caveolar biogenesis and morphology. Regulates caveolae morphology by inducing membrane curvature within caveolae. Plays a role in caveola formation in a tissue-specific manner. Required for the formation of caveolae in the lung and fat endothelia but not in the heart endothelia. Negatively regulates the size or stability of CAVIN complexes in the lung endothelial cells. May play a role in targeting PRKCA to caveolae. This Homo sapiens (Human) protein is Caveolae-associated protein 2.